The chain runs to 299 residues: Apolipoprotein E (299 aa).

The N-terminal stretch at 1–18 (MKVLWAVLVVTLLAGCRA) is a signal peptide. Repeat copies occupy residues 74–95 (LLMEDTMKEVKAYKAELEQELA), 96–117 (PMAEDTRARLSKELQAAQARLG), 118–139 (ADMEEVRNRLAQYRGEVQAMLG), 140–161 (QSAEELRARLASHLRKMRKRLL), 162–183 (RDAEDLQKRLAVYKAGAREGAE), 184–205 (RGVSAIRERLASLVEQGRLRSA), and 224–245 (GRLEEVGGQARDRLDVVREQME). The segment at 74–245 (LLMEDTMKEV…RLDVVREQME (172 aa)) is 8 X 22 AA approximate tandem repeats. Met137 bears the Methionine sulfoxide mark. At Ser141 the chain carries Phosphoserine. Residues 152 to 162 (HLRKMRKRLLR) form an LDL and other lipoprotein receptors binding region. Residue 156–159 (MRKR) participates in heparin binding. Positions 204-273 (SALTSQPLRE…GWFEPMVEDM (70 aa)) are lipid-binding and lipoprotein association. Residue 219–226 (GERLRGRL) coordinates heparin. The specificity for association with VLDL stretch occupies residues 261–273 (RLKGWFEPMVEDM).

This sequence belongs to the apolipoprotein A1/A4/E family. As to quaternary structure, homotetramer. May interact with ABCA1; functionally associated with ABCA1 in the biogenesis of HDLs. May interact with APP/A4 amyloid-beta peptide; the interaction is extremely stable in vitro but its physiological significance is unclear. May interact with MAPT. May interact with MAP2. In the cerebrospinal fluid, interacts with secreted SORL1. Interacts with PMEL; this allows the loading of PMEL luminal fragment on ILVs to induce fibril nucleation. Post-translationally, APOE exists as multiple glycosylated and sialylated glycoforms within cells and in plasma. The extent of glycosylation and sialylation are tissue and context specific. In terms of processing, glycated in plasma VLDL. Phosphorylated by FAM20C in the extracellular medium.

It is found in the secreted. Its subcellular location is the extracellular space. It localises to the extracellular matrix. The protein localises to the extracellular vesicle. The protein resides in the endosome. It is found in the multivesicular body. In terms of biological role, APOE is an apolipoprotein, a protein associating with lipid particles, that mainly functions in lipoprotein-mediated lipid transport between organs via the plasma and interstitial fluids. APOE is a core component of plasma lipoproteins and is involved in their production, conversion and clearance. Apolipoproteins are amphipathic molecules that interact both with lipids of the lipoprotein particle core and the aqueous environment of the plasma. As such, APOE associates with chylomicrons, chylomicron remnants, very low density lipoproteins (VLDL) and intermediate density lipoproteins (IDL) but shows a preferential binding to high-density lipoproteins (HDL). It also binds a wide range of cellular receptors including the LDL receptor/LDLR, the LDL receptor-related proteins LRP1, LRP2 and LRP8 and the very low-density lipoprotein receptor/VLDLR that mediate the cellular uptake of the APOE-containing lipoprotein particles. Finally, APOE also has a heparin-binding activity and binds heparan-sulfate proteoglycans on the surface of cells, a property that supports the capture and the receptor-mediated uptake of APOE-containing lipoproteins by cells. A main function of APOE is to mediate lipoprotein clearance through the uptake of chylomicrons, VLDLs, and HDLs by hepatocytes. APOE is also involved in the biosynthesis by the liver of VLDLs as well as their uptake by peripheral tissues ensuring the delivery of triglycerides and energy storage in muscle, heart and adipose tissues. By participating in the lipoprotein-mediated distribution of lipids among tissues, APOE plays a critical role in plasma and tissues lipid homeostasis. APOE is also involved in two steps of reverse cholesterol transport, the HDLs-mediated transport of cholesterol from peripheral tissues to the liver, and thereby plays an important role in cholesterol homeostasis. First, it is functionally associated with ABCA1 in the biogenesis of HDLs in tissues. Second, it is enriched in circulating HDLs and mediates their uptake by hepatocytes. APOE also plays an important role in lipid transport in the central nervous system, regulating neuron survival and sprouting. This chain is Apolipoprotein E (APOE), found in Erethizon dorsatum (North American porcupine).